The chain runs to 167 residues: I-Kappa-B like protein I1 (167 aa).

ANK repeat units lie at residues 54-86 (HGKQ…DING), 91-121 (FGNT…NMGI), and 125-154 (LFKT…QCRI).

It belongs to the polydnaviridae I-Kappa-B-like protein family.

Suppresses the host immune response through NF-kappa-B inactivation. Possesses ankyrin repeat domains required for NF-kappa-B binding but lacks the regulatory regions required for dissociation from NF-kappa-B and degradation. Therefore, prevents host NF-kappa-B release and subsequent activation. This is I-Kappa-B like protein I1 (I1) from Microplitis demolitor (Parasitoid wasp).